A 272-amino-acid chain; its full sequence is uncharacterized protein (272 aa).

The segment at 193-250 is disordered; the sequence is AFLLPNNSKGVEKSEENEDGVTDNDSSNVNSSTNESPNPTDINVCSNDDATDNTENNL. Residues 215–233 show a composition bias toward low complexity; that stretch reads DNDSSNVNSSTNESPNPTD. Polar residues predominate over residues 235-248; sequence NVCSNDDATDNTEN.

It belongs to the pal1 family.

The protein resides in the cytoplasm. Its subcellular location is the nucleus. This is an uncharacterized protein from Schizosaccharomyces pombe (strain 972 / ATCC 24843) (Fission yeast).